A 144-amino-acid chain; its full sequence is Nucleoside diphosphate kinase (144 aa).

The ATP site is built by Lys-11, Phe-59, Arg-87, Thr-93, Arg-104, and Asn-114. His-117 (pros-phosphohistidine intermediate) is an active-site residue.

Belongs to the NDK family. In terms of assembly, homotetramer. The cofactor is Mg(2+).

The protein localises to the cytoplasm. The catalysed reaction is a 2'-deoxyribonucleoside 5'-diphosphate + ATP = a 2'-deoxyribonucleoside 5'-triphosphate + ADP. It catalyses the reaction a ribonucleoside 5'-diphosphate + ATP = a ribonucleoside 5'-triphosphate + ADP. Functionally, major role in the synthesis of nucleoside triphosphates other than ATP. The ATP gamma phosphate is transferred to the NDP beta phosphate via a ping-pong mechanism, using a phosphorylated active-site intermediate. This is Nucleoside diphosphate kinase from Baumannia cicadellinicola subsp. Homalodisca coagulata.